A 339-amino-acid chain; its full sequence is NADH-quinone oxidoreductase subunit H (339 aa).

9 helical membrane-spanning segments follow: residues 9–29 (IFPLIIIALKVVAITTPLILC), 50–70 (PNVVGPFGLLQPIADAVKLLF), 82–102 (ILFILAPMITFILSLIGWAVI), 115–135 (VGVLYILAISSLSVYGIIIAG), 161–181 (MGLVIITVLLTTGTLNLSEII), 187–207 (MPWWIDLMLLPMGVVFFISVL), 235–255 (MGFALFFLGEYANMILVSAMT), 275–295 (IPGFFWFVFKVGFLLFCFLWI), and 311–331 (GWKVFLPLTLFWVVLVSSVLV).

Belongs to the complex I subunit 1 family. In terms of assembly, NDH-1 is composed of 14 different subunits. Subunits NuoA, H, J, K, L, M, N constitute the membrane sector of the complex.

It is found in the cell inner membrane. The enzyme catalyses a quinone + NADH + 5 H(+)(in) = a quinol + NAD(+) + 4 H(+)(out). In terms of biological role, NDH-1 shuttles electrons from NADH, via FMN and iron-sulfur (Fe-S) centers, to quinones in the respiratory chain. The immediate electron acceptor for the enzyme in this species is believed to be ubiquinone. Couples the redox reaction to proton translocation (for every two electrons transferred, four hydrogen ions are translocated across the cytoplasmic membrane), and thus conserves the redox energy in a proton gradient. This subunit may bind ubiquinone. The sequence is that of NADH-quinone oxidoreductase subunit H from Rickettsia peacockii (strain Rustic).